A 618-amino-acid chain; its full sequence is COMPASS component cclA (618 aa).

The tract at residues 1-91 (MSSIQPVGSS…KKAAVAPNSA (91 aa)) is disordered. Low complexity-rich tracts occupy residues 8-19 (GSSGPSSNINSP) and 37-49 (NARS…SNAS). The segment covering 57-69 (SKRNKRDSRKKRE) has biased composition (basic residues). A B30.2/SPRY domain is found at 157-368 (IADPGFPHIK…QSNVFSTKHL (212 aa)). The interval 588-618 (TLSVGHEGSPNPATPSAPLENTVPTEDVEMS) is disordered.

The protein belongs to the cclA family. In terms of assembly, component of the COMPASS complex.

The protein resides in the nucleus. It is found in the chromosome. It localises to the telomere. In terms of biological role, component of the COMPASS (Set1C) complex that specifically mono-, di- and trimethylates histone H3 to form H3K4me1/2/3, which subsequently plays a role in telomere length maintenance and transcription elongation regulation. Controls the production of several secondary metabolites, including gliotoxin, but does not contribute to pathogenicity. In Aspergillus fumigatus (strain ATCC MYA-4609 / CBS 101355 / FGSC A1100 / Af293) (Neosartorya fumigata), this protein is COMPASS component cclA.